The chain runs to 378 residues: MAKRDYYEVLGVAKNASDDEIKKAYRKLAMKYHPDRNPDSKDAEEHFKEAKEAYEMLSDGQKRAAYDQYGHAGVDPNMGGAGGQGFGGFADAFGDIFGDIFGQAAGGAARGGRGGPQVYRGADLRYSMEITLEQAAHGYDTQIRVPSWVSCEVCHGSGAKPGTKPETCPTCHGQGTVRMSQGFFSIQQTCPKCHGTGTYIPEPCVHCHGSGKVKETKTLEVKIPAGIDDGMRIRSAGNGEPGINGGPPGDLYVEIHIKPHSVFERDGDDLHCQMPIPFTTAALGGEIEVPTLAGRASFPVPEGTQSGKTFRLRGKGIKGLRSSIAGDLYVHVQVETPVKLTDQQRDLLKQFEKSLAEGGARHSPQSKSWFDRVKSFFE.

Residues 5–70 form the J domain; sequence DYYEVLGVAK…QKRAAYDQYG (66 aa). The CR-type zinc-finger motif lies at 138-216; the sequence is GYDTQIRVPS…CHGSGKVKET (79 aa). Zn(2+) is bound by residues C151, C154, C168, C171, C190, C193, C204, and C207. CXXCXGXG motif repeat units lie at residues 151–158, 168–175, 190–197, and 204–211; these read CEVCHGSG, CPTCHGQG, CPKCHGTG, and CVHCHGSG.

It belongs to the DnaJ family. As to quaternary structure, homodimer. Requires Zn(2+) as cofactor.

The protein resides in the cytoplasm. Functionally, participates actively in the response to hyperosmotic and heat shock by preventing the aggregation of stress-denatured proteins and by disaggregating proteins, also in an autonomous, DnaK-independent fashion. Unfolded proteins bind initially to DnaJ; upon interaction with the DnaJ-bound protein, DnaK hydrolyzes its bound ATP, resulting in the formation of a stable complex. GrpE releases ADP from DnaK; ATP binding to DnaK triggers the release of the substrate protein, thus completing the reaction cycle. Several rounds of ATP-dependent interactions between DnaJ, DnaK and GrpE are required for fully efficient folding. Also involved, together with DnaK and GrpE, in the DNA replication of plasmids through activation of initiation proteins. This is Chaperone protein DnaJ from Burkholderia ambifaria (strain MC40-6).